The sequence spans 131 residues: Ribonuclease P protein component (131 aa).

The protein belongs to the RnpA family. Consists of a catalytic RNA component (M1 or rnpB) and a protein subunit.

It carries out the reaction Endonucleolytic cleavage of RNA, removing 5'-extranucleotides from tRNA precursor.. RNaseP catalyzes the removal of the 5'-leader sequence from pre-tRNA to produce the mature 5'-terminus. It can also cleave other RNA substrates such as 4.5S RNA. The protein component plays an auxiliary but essential role in vivo by binding to the 5'-leader sequence and broadening the substrate specificity of the ribozyme. In Acinetobacter baylyi (strain ATCC 33305 / BD413 / ADP1), this protein is Ribonuclease P protein component.